A 274-amino-acid chain; its full sequence is MKFFAVFALCVASVSAANLDAIAKPGFPAGRIINGHEAEKGEAPFIVSLKAGKGHFCGGSIIAENWVLTAGHCLIFDEFEIVAGLHSRNDESDVQIRKVTGKHQQIVHEKYGGGVGPNDIGLIYVDKPFNLNALTRDGTAAVAKVNLPTGKYESTGEGKLYGWGLDNSGFSPNILNTLDVNIIGYEECKNALNSDAPLDPVNICSYTAGAIDGACNGDSGGPMVRITPDGTELVGIVSWGYQPCASTTMPSVYTWTSAFDKWIEDSIENYAQLL.

The first 16 residues, 1 to 16 (MKFFAVFALCVASVSA), serve as a signal peptide directing secretion. In terms of domain architecture, Peptidase S1 spans 32–268 (IINGHEAEKG…FDKWIEDSIE (237 aa)). C57 and C73 are disulfide-bonded. Residues H72 and D119 each act as charge relay system in the active site. 2 cysteine pairs are disulfide-bonded: C188/C204 and C215/C244. The active-site Charge relay system is the S219.

This sequence belongs to the peptidase S1 family. In terms of tissue distribution, expressed in the midgut.

The protein localises to the secreted. Its function is as follows. Protein with lectin and protease activity involved in the establishment of trypanosome infections in tsetse flies. Binds D-glucosamine and agglutinates bloodstream-form trypanosomes and rabbit red blood cells. Capable of inducing transformation of bloodstream-form trypanosomes into procyclic (midgut) forms in vitro. This is Lectizyme (Gpl) from Glossina austeni (Savannah tsetse fly).